The sequence spans 85 residues: Beta-insect depressant toxin Lqh-dprIT3c (85 aa).

Residues 1-21 (MKLLLLLTISASMLIEGLVNA) form the signal peptide. Residues 22–82 (DGYIRGGDGC…EWDYETNTCG (61 aa)) form the LCN-type CS-alpha/beta domain. Cystine bridges form between C31–C81, C35–C56, C42–C63, and C46–C65. At G82 the chain carries Glycine amide.

This sequence belongs to the long (4 C-C) scorpion toxin superfamily. Sodium channel inhibitor family. Beta subfamily. In terms of tissue distribution, expressed by the venom gland.

It localises to the secreted. Functionally, depressant insect beta-toxins cause a transient contraction paralysis followed by a slow flaccid paralysis. They bind voltage-independently at site-4 of sodium channels (Nav) and block action potentials, primarily by depolarizing the axonal membrane and suppressing the sodium current. This depressant toxin is active only on insects. It is found in a relatively small amount in the venom, and its activity on insects is 10-fold higher compared to other known depressant toxins. The sequence is that of Beta-insect depressant toxin Lqh-dprIT3c from Leiurus hebraeus (Hebrew deathstalker scorpion).